The chain runs to 203 residues: ATP synthase subunit b (203 aa).

The chain crosses the membrane as a helical span at residues 14 to 34 (FVWPLLGAGLLLAAEGVAWAS).

This sequence belongs to the ATPase B chain family. In terms of assembly, F-type ATPases have 2 components, F(1) - the catalytic core - and F(0) - the membrane proton channel. F(1) has five subunits: alpha(3), beta(3), gamma(1), delta(1), epsilon(1). F(0) has three main subunits: a(1), b(2) and c(10-14). The alpha and beta chains form an alternating ring which encloses part of the gamma chain. F(1) is attached to F(0) by a central stalk formed by the gamma and epsilon chains, while a peripheral stalk is formed by the delta and b chains.

It localises to the cell inner membrane. In terms of biological role, f(1)F(0) ATP synthase produces ATP from ADP in the presence of a proton or sodium gradient. F-type ATPases consist of two structural domains, F(1) containing the extramembraneous catalytic core and F(0) containing the membrane proton channel, linked together by a central stalk and a peripheral stalk. During catalysis, ATP synthesis in the catalytic domain of F(1) is coupled via a rotary mechanism of the central stalk subunits to proton translocation. Component of the F(0) channel, it forms part of the peripheral stalk, linking F(1) to F(0). This is ATP synthase subunit b from Syntrophobacter fumaroxidans (strain DSM 10017 / MPOB).